The sequence spans 349 residues: Probable ethanolamine kinase (349 aa).

This sequence belongs to the choline/ethanolamine kinase family.

The protein resides in the cytoplasm. It carries out the reaction ethanolamine + ATP = phosphoethanolamine + ADP + H(+). Its pathway is phospholipid metabolism; phosphatidylethanolamine biosynthesis; phosphatidylethanolamine from ethanolamine: step 1/3. In terms of biological role, highly specific for ethanolamine phosphorylation. May be a rate-controlling step in phosphatidylethanolamine biosynthesis. The chain is Probable ethanolamine kinase (etnk) from Nematostella vectensis (Starlet sea anemone).